Reading from the N-terminus, the 506-residue chain is Alpha-L-fucosidase 1 (506 aa).

Residues M1–S23 form the signal peptide. N-linked (GlcNAc...) asparagine glycans are attached at residues N22, N82, N248, N320, N355, and N487.

The protein belongs to the glycosyl hydrolase 29 family.

The protein localises to the secreted. It localises to the extracellular space. The protein resides in the apoplast. It catalyses the reaction an alpha-L-fucoside + H2O = L-fucose + an alcohol. Its function is as follows. Hydrolyzes both 3- and 4-linked fucoses in Lewis determinants. Not active on neither 2-linked fucose nor on fucose in alpha-1,3-linkage to the innermost GlcNAc. This is Alpha-L-fucosidase 1 (FUC1) from Arabidopsis thaliana (Mouse-ear cress).